Reading from the N-terminus, the 1356-residue chain is MRLLERDDAGEIRPTKDLPSGKIPPYAILSHTWGPDEEEVSYKDLKDGRAVSKLGYNKIRFCADQAWRDGRKFFWVDTCCIDKSNSTELQEAINSMFRWYRDAAKCYVYLTDVSTDKRDADGDPSWKWAFQKCKWFTRGWTLQELIAPTSVEFFSREKARIGDRNSLERMIHDVTGIPLEALRGSPLSDFSVHDRMAWMKQRNTTREEDMAYSLFGIFDVHLPLIYGEGKEKALERLREKIGKDDGCLADLRVTDPRHDKKRIEAAKGGLLKDSYCWVLSNVQFQQWHDGDDQRLLWINGDPGKGKTMLLCGIIDELKKSTPPGLLSFFFCQATDSRINNATAVLRGLIYLLVSQQPALISHVRRPYDHAGKKMFEGPNVWIVLCEIFTSILQDPGLRMTYLIIDALDECVTDLPQLLELITRTSCTSSPIKWIVSSRNWPDIEEQLETATQKARLSLELNAESISTAVNAFIQNRIDQLAPKTKHDANMIGKIRDYLHSHANGTFLWVALVCQALADPKVKKRHILAKLQTFPRGLDSLYARMLEQIGHSEDAELCKQILAVAAAVRRPISLDELASLVEMPDDVSDDPESLEEIVKLCGSFLIIRERTVYFVHQSAKDFLLGTASDKASNKASQEAFELVFPTGIEDVSYIIFWRSLNVMSQKLRRDIYCLNAPGFLIDNVRVPDPDPLATVRYSCIYWIDHLRDLVSSTSSKWVHLLQDDGDIHRFLTTKYLYWLEALSLLRALPEGINAIRQLESLLGHTIRGRLIAIVRDGYRFALSYRMIIEKAPLQAYTSALVFAPTDSMIKKIFKKEEPGWISTISVVEAEWNACTQTLEGHGSSVLSVAFSADGQRVASGSDDKTIKIWDTASGTGTQTLEGHGGSVWSVAFSPDRERVASGSDDKTIKIWDAASGTCTQTLEGHGGRVQSVAFSPDGQRVASGSDDHTIKIWDAASGTCTQTLEGHGSSVLSVAFSPDGQRVASGSGDKTIKIWDTASGTCTQTLEGHGGSVWSVAFSPDGQRVASGSDDKTIKIWDTASGTCTQTLEGHGGWVQSVVFSPDGQRVASGSDDHTIKIWDAVSGTCTQTLEGHGDSVWSVAFSPDGQRVASGSIDGTIKIWDAASGTCTQTLEGHGGWVHSVAFSPDGQRVASGSIDGTIKIWDAASGTCTQTLEGHGGWVQSVAFSPDGQRVASGSSDKTIKIWDTASGTCTQTLEGHGGWVQSVAFSPDGQRVASGSSDNTIKIWDTASGTCTQTLNVGSTATCLSFDYTNAYINTNIGRIQIATATMESLNQLSSPVCYSYGLGQDHRWITCNNQNVLWLPPEYHTSAFTMQGRKIVLGSYSGRIIIFLFSRDV.

Residues 294–629 (RLLWINGDPG…DFLLGTASDK (336 aa)) form the NACHT domain. Position 300–307 (300–307 (GDPGKGKT)) interacts with GTP. 10 WD repeats span residues 839–869 (GHGSSVLSVAFSADGQRVASGSDDKTIKIWD), 881–911 (GHGGSVWSVAFSPDRERVASGSDDKTIKIWD), 923–953 (GHGGRVQSVAFSPDGQRVASGSDDHTIKIWD), 965–995 (GHGSSVLSVAFSPDGQRVASGSGDKTIKIWD), 1007–1037 (GHGGSVWSVAFSPDGQRVASGSDDKTIKIWD), 1049–1079 (GHGGWVQSVVFSPDGQRVASGSDDHTIKIWD), 1091–1121 (GHGDSVWSVAFSPDGQRVASGSIDGTIKIWD), 1133–1163 (GHGGWVHSVAFSPDGQRVASGSIDGTIKIWD), 1175–1205 (GHGGWVQSVAFSPDGQRVASGSSDKTIKIWD), and 1217–1247 (GHGGWVQSVAFSPDGQRVASGSSDNTIKIWD).

Functionally, responsible for vegetative incompatibility through specific interactions with different alleles of the unlinked gene, het-c. In Podospora anserina (Pleurage anserina), this protein is Vegetative incompatibility protein HET-E-1 (HET-E1).